We begin with the raw amino-acid sequence, 507 residues long: ATP synthase subunit alpha (507 aa).

Residue G169–T176 coordinates ATP.

The protein belongs to the ATPase alpha/beta chains family. In terms of assembly, F-type ATPases have 2 components, CF(1) - the catalytic core - and CF(0) - the membrane proton channel. CF(1) has five subunits: alpha(3), beta(3), gamma(1), delta(1), epsilon(1). CF(0) has three main subunits: a(1), b(2) and c(9-12). The alpha and beta chains form an alternating ring which encloses part of the gamma chain. CF(1) is attached to CF(0) by a central stalk formed by the gamma and epsilon chains, while a peripheral stalk is formed by the delta and b chains.

The protein localises to the cell inner membrane. It carries out the reaction ATP + H2O + 4 H(+)(in) = ADP + phosphate + 5 H(+)(out). In terms of biological role, produces ATP from ADP in the presence of a proton gradient across the membrane. The alpha chain is a regulatory subunit. The protein is ATP synthase subunit alpha of Desulfotalea psychrophila (strain LSv54 / DSM 12343).